The chain runs to 529 residues: uncharacterized protein (529 aa).

This sequence to M.jannaschii MJ1451.

This is an uncharacterized protein from Methanothermobacter thermautotrophicus (strain ATCC 29096 / DSM 1053 / JCM 10044 / NBRC 100330 / Delta H) (Methanobacterium thermoautotrophicum).